The following is a 328-amino-acid chain: Probable cell division protein WhiA (328 aa).

Residues 275 to 308 (SLEELGRLAEPPMTKDAVAGRIRRLLSMADKRAE) constitute a DNA-binding region (H-T-H motif).

Belongs to the WhiA family.

Its function is as follows. Involved in cell division and chromosome segregation. This Corynebacterium jeikeium (strain K411) protein is Probable cell division protein WhiA.